We begin with the raw amino-acid sequence, 321 residues long: Protease HtpX homolog (321 aa).

The next 2 helical transmembrane spans lie at 6–26 (TAML…LIGG) and 28–48 (GGMM…YWNS). Position 130 (H130) interacts with Zn(2+). E131 is a catalytic residue. A Zn(2+)-binding site is contributed by H134. The next 2 membrane-spanning stretches (helical) occupy residues 145-165 (ITAT…FFGG) and 173-193 (PLGF…AMLV). Residue E202 participates in Zn(2+) binding. A disordered region spans residues 281–321 (EFSPRASTPPPSGDRPVRKSGSVPTTGWRRGNENERKGPWS). The span at 310–321 (RGNENERKGPWS) shows a compositional bias: basic and acidic residues.

Belongs to the peptidase M48B family. Zn(2+) serves as cofactor.

It localises to the cell inner membrane. In Agrobacterium fabrum (strain C58 / ATCC 33970) (Agrobacterium tumefaciens (strain C58)), this protein is Protease HtpX homolog.